The following is a 376-amino-acid chain: uncharacterized protein (376 aa).

An N-terminal signal peptide occupies residues 1–22 (MVATGRIIITLLAAALDEIILA).

It belongs to the ascovirus HvAV ORF17 family.

This is an uncharacterized protein from Heliothis virescens ascovirus 3e (HvAV-3e).